Reading from the N-terminus, the 470-residue chain is Glucose-1-phosphate adenylyltransferase (470 aa).

Residues Gly164, 181–182, and Ser199 each bind alpha-D-glucose 1-phosphate; that span reads EK.

This sequence belongs to the bacterial/plant glucose-1-phosphate adenylyltransferase family. Homotetramer.

It carries out the reaction alpha-D-glucose 1-phosphate + ATP + H(+) = ADP-alpha-D-glucose + diphosphate. It functions in the pathway glycan biosynthesis; glycogen biosynthesis. Involved in the biosynthesis of ADP-glucose, a building block required for the elongation reactions to produce glycogen. Catalyzes the reaction between ATP and alpha-D-glucose 1-phosphate (G1P) to produce pyrophosphate and ADP-Glc. The chain is Glucose-1-phosphate adenylyltransferase from Pseudarthrobacter chlorophenolicus (strain ATCC 700700 / DSM 12829 / CIP 107037 / JCM 12360 / KCTC 9906 / NCIMB 13794 / A6) (Arthrobacter chlorophenolicus).